An 817-amino-acid chain; its full sequence is Protein EFR3 homolog B (817 aa).

Ser-212, Ser-214, and Ser-216 each carry phosphoserine.

This sequence belongs to the EFR3 family. Component of a phosphatidylinositol 4-kinase (PI4K) complex, composed of PI4KA, EFR3 (EFR3A or EFR3B), TTC7 (TTC7A or TTC7B) and HYCC (HYCC1 or HYCC2). Palmitoylated at its N-terminus, anchoring the protein to the plasma membrane. As to expression, widely expressed.

Its subcellular location is the cell membrane. It localises to the cytoplasm. The protein localises to the cytosol. In terms of biological role, component of a complex required to localize phosphatidylinositol 4-kinase (PI4K) to the plasma membrane. The complex acts as a regulator of phosphatidylinositol 4-phosphate (PtdIns(4)P) synthesis. In the complex, EFR3B probably acts as the membrane-anchoring component. Also involved in responsiveness to G-protein-coupled receptors; it is however unclear whether this role is direct or indirect. The sequence is that of Protein EFR3 homolog B (Efr3b) from Mus musculus (Mouse).